Reading from the N-terminus, the 166-residue chain is UPF0179 protein Tneu_1978 (166 aa).

The disordered stretch occupies residues 140-166 (PPSPSKSGGATASRDPSRAPPSRPLSK). Residues 157–166 (RAPPSRPLSK) are compositionally biased toward pro residues.

This sequence belongs to the UPF0179 family.

In Pyrobaculum neutrophilum (strain DSM 2338 / JCM 9278 / NBRC 100436 / V24Sta) (Thermoproteus neutrophilus), this protein is UPF0179 protein Tneu_1978.